The primary structure comprises 91 residues: Alpha-elapitoxin-Oh2b (91 aa).

The signal sequence occupies residues 1-21 (MKTLLLTLVVMTIVCLDLGYT). 5 disulfides stabilise this stretch: C24–C41, C34–C62, C47–C51, C66–C77, and C78–C83.

Belongs to the three-finger toxin family. Long-chain subfamily. Type II alpha-neurotoxin sub-subfamily. In terms of assembly, monomer. Expressed by the venom gland.

The protein localises to the secreted. Its function is as follows. Binds with high affinity to muscular (alpha-1/CHRNA1) and neuronal (alpha-7/CHRNA7) nicotinic acetylcholine receptor (nAChR) and inhibits acetylcholine from binding to the receptor, thereby impairing neuromuscular and neuronal transmission. Recombinant LNTX1 leads to a functional block of the muscle-type acetylcholine receptors. Has a cytotoxic activity. This neurotoxin is lethal. The chain is Alpha-elapitoxin-Oh2b from Ophiophagus hannah (King cobra).